Here is a 233-residue protein sequence, read N- to C-terminus: MSLVFIIMAIAGYLVGAIPMAYLLSRWRRGIDIRRYGSGNVGASNVVKTAGKRLGLAVFIFDVSKGAVMILLSGALGLALWQQIVVGLFTIAGHNWPVFLRFNGGRGIATSLGVALVMAPVPALIALGTAIAFGLFKKMAPGVFLGVAALPFMSGYFHGFFGIREYQTISWGFIGIFLIMVTRRLMAPDNEYAHTVSKAELIFNRMFLDRDIRSRSVWINRNSAPAEESPNIL.

A run of 5 helical transmembrane segments spans residues Leu-3–Leu-23, Met-69–Phe-89, Leu-116–Phe-136, Val-143–Ile-163, and Thr-168–Pro-188.

It belongs to the PlsY family. Probably interacts with PlsX.

It localises to the cell membrane. The enzyme catalyses an acyl phosphate + sn-glycerol 3-phosphate = a 1-acyl-sn-glycero-3-phosphate + phosphate. The protein operates within lipid metabolism; phospholipid metabolism. Its function is as follows. Catalyzes the transfer of an acyl group from acyl-phosphate (acyl-PO(4)) to glycerol-3-phosphate (G3P) to form lysophosphatidic acid (LPA). This enzyme utilizes acyl-phosphate as fatty acyl donor, but not acyl-CoA or acyl-ACP. This is Glycerol-3-phosphate acyltransferase 5 from Dehalococcoides mccartyi (strain ATCC BAA-2266 / KCTC 15142 / 195) (Dehalococcoides ethenogenes (strain 195)).